The primary structure comprises 155 residues: Ribosomal RNA large subunit methyltransferase H (155 aa).

S-adenosyl-L-methionine contacts are provided by residues Leu-72, Gly-103, and 122–127 (LSPLTF).

This sequence belongs to the RNA methyltransferase RlmH family. In terms of assembly, homodimer.

The protein resides in the cytoplasm. The enzyme catalyses pseudouridine(1915) in 23S rRNA + S-adenosyl-L-methionine = N(3)-methylpseudouridine(1915) in 23S rRNA + S-adenosyl-L-homocysteine + H(+). In terms of biological role, specifically methylates the pseudouridine at position 1915 (m3Psi1915) in 23S rRNA. The chain is Ribosomal RNA large subunit methyltransferase H from Alkalilimnicola ehrlichii (strain ATCC BAA-1101 / DSM 17681 / MLHE-1).